A 1032-amino-acid polypeptide reads, in one-letter code: MFKWLGKLLGDPNAKVVKKMQPTLDEINALEPKMKALSDEQLREKTAELRTRFAELTKADREALDDRYADENRHDSTVEKDYQKELRVIEDAALDELLPEAFALVREASSRVIGQRHYDVQMIGGIVLHEGRIAEMKTGEGKTLVASLPLFLNAIAGRGAHLITVNDYLAKVGGGWMGPIFHSLGMSTGYIAHDYSAIYDPNYIDPNAKQDDSRLVHWRPCSRREAYMADMTYGTNNEYGFDYLRDNMVQHKDQCVQRELHYAIVDEVDNILIDEARTPLIISGPAQESSDNYRRFSSLVRGLKRSSISPDEVRKGLKDDFDGDYWIDEKSRSITLTESGLEVMEKRLNLPDGENMYDAKNFELTHYLENALKAEYVFHRDVDYVVQNGEVVIVDEFTGRTMPGRRWSDGLHQAVEAKEAVEVRRENVTLATITFQNYFRMYNKLGGMTGTAITEAEEFSKIYNLEVVIIPTNRQVVREDYRDHIYASQKAKYNAVLREIKEMHEVGRPVLVGTTSVESSEIVSNLLKQEGLEHYLLNAKQHEREAYIVAQAGRTGAITIATNMAGRGTDILLGGNPDGLIEEHLKALGTTITDATPEQLAQAQAQAKADVEAERKAVMEAGGLHIIGTERHEARRIDNQLRGRAGRQGDPGSSRFFISLEDELMTRFGRIDTIKRLMERMSDGDEELPLESGLLDKAIESAQTRVEGYNFDVRKHVVEYDDVVNKQREVIYADRHAILGGEDMGDRILEMVVDEIDIHVEEFLDNRELDKPDLEGFLRQLYSIVPQLKAQETELAARFKGKQADEIGEIATEVVEEAYNRLGEELATQYTTLLQRGVQPIPGVSGPEAFFAHFERQEMLGAIDREWIDYLTAVDELRQGIGNVAIAQQDPLVAFKREAFKMFDELKGNIQNRIVYNFFTDAANWQVRLRQVELEMEARLALAQTAGGSENATEDAPKPAKRGVGGAARRVSNAAGQAAPARRIVIKIGRNDPCPCDSGKKFKACHGLPGKEAELEAILAVKHTHAQAVGKK.

ATP is bound by residues Gln-121, 139 to 143 (GEGKT), and Asp-570. Residues 945 to 975 (TAGGSENATEDAPKPAKRGVGGAARRVSNAA) form a disordered region. Residues Cys-994, Cys-996, Cys-1005, and His-1006 each contribute to the Zn(2+) site.

This sequence belongs to the SecA family. Monomer and homodimer. Part of the essential Sec protein translocation apparatus which comprises SecA, SecYEG and auxiliary proteins SecDF. Other proteins may also be involved. Zn(2+) serves as cofactor.

The protein resides in the cell membrane. It is found in the cytoplasm. It catalyses the reaction ATP + H2O + cellular proteinSide 1 = ADP + phosphate + cellular proteinSide 2.. In terms of biological role, part of the Sec protein translocase complex. Interacts with the SecYEG preprotein conducting channel. Has a central role in coupling the hydrolysis of ATP to the transfer of proteins into and across the cell membrane, serving as an ATP-driven molecular motor driving the stepwise translocation of polypeptide chains across the membrane. The sequence is that of Protein translocase subunit SecA from Herpetosiphon aurantiacus (strain ATCC 23779 / DSM 785 / 114-95).